Reading from the N-terminus, the 558-residue chain is Glucose-6-phosphate isomerase (558 aa).

E362 acts as the Proton donor in catalysis. Active-site residues include H393 and K523.

The protein belongs to the GPI family.

It localises to the cytoplasm. It carries out the reaction alpha-D-glucose 6-phosphate = beta-D-fructose 6-phosphate. It functions in the pathway carbohydrate degradation; glycolysis; D-glyceraldehyde 3-phosphate and glycerone phosphate from D-glucose: step 2/4. In Drosophila yakuba (Fruit fly), this protein is Glucose-6-phosphate isomerase (Pgi).